Reading from the N-terminus, the 386-residue chain is Succinate--CoA ligase [ADP-forming] subunit beta (386 aa).

Residues 9-244 (KEILRKYGVP…HDEEDPLETR (236 aa)) form the ATP-grasp domain. ATP-binding positions include Lys46, 53 to 55 (GRG), Glu99, Cys102, and Glu107. Asn199 and Asp213 together coordinate Mg(2+). Substrate-binding positions include Asn264 and 321-323 (GIM).

This sequence belongs to the succinate/malate CoA ligase beta subunit family. Heterotetramer of two alpha and two beta subunits. Mg(2+) serves as cofactor.

The enzyme catalyses succinate + ATP + CoA = succinyl-CoA + ADP + phosphate. It carries out the reaction GTP + succinate + CoA = succinyl-CoA + GDP + phosphate. Its pathway is carbohydrate metabolism; tricarboxylic acid cycle; succinate from succinyl-CoA (ligase route): step 1/1. Its function is as follows. Succinyl-CoA synthetase functions in the citric acid cycle (TCA), coupling the hydrolysis of succinyl-CoA to the synthesis of either ATP or GTP and thus represents the only step of substrate-level phosphorylation in the TCA. The beta subunit provides nucleotide specificity of the enzyme and binds the substrate succinate, while the binding sites for coenzyme A and phosphate are found in the alpha subunit. This Rickettsia typhi (strain ATCC VR-144 / Wilmington) protein is Succinate--CoA ligase [ADP-forming] subunit beta.